Consider the following 217-residue polypeptide: Protein GrpE (217 aa).

Composition is skewed to acidic residues over residues 1-28 (MSDDQGDAVEASSEADEEASTSPDEGDD), 136-152 (DILDGEGVEAIEPDPGT), and 204-217 (SEAEDDADGEDGDE). 3 disordered regions span residues 1–44 (MSDD…NDPA), 135–157 (DDILDGEGVEAIEPDPGTETDPK), and 193–217 (QVTVSEGPSGDSEAEDDADGEDGDE).

Belongs to the GrpE family. Homodimer.

The protein localises to the cytoplasm. Participates actively in the response to hyperosmotic and heat shock by preventing the aggregation of stress-denatured proteins, in association with DnaK and GrpE. It is the nucleotide exchange factor for DnaK and may function as a thermosensor. Unfolded proteins bind initially to DnaJ; upon interaction with the DnaJ-bound protein, DnaK hydrolyzes its bound ATP, resulting in the formation of a stable complex. GrpE releases ADP from DnaK; ATP binding to DnaK triggers the release of the substrate protein, thus completing the reaction cycle. Several rounds of ATP-dependent interactions between DnaJ, DnaK and GrpE are required for fully efficient folding. The chain is Protein GrpE from Natronomonas pharaonis (strain ATCC 35678 / DSM 2160 / CIP 103997 / JCM 8858 / NBRC 14720 / NCIMB 2260 / Gabara) (Halobacterium pharaonis).